Consider the following 429-residue polypeptide: Tol-Pal system protein TolB (429 aa).

A signal peptide spans 1-22 (MTRRLFILITIMLCLIPALLHS). Disordered stretches follow at residues 362-383 (PDGT…RWSP) and 407-429 (GSGQ…SPRW). The segment covering 363-374 (DGTNDTRLTSEG) has biased composition (polar residues).

This sequence belongs to the TolB family. In terms of assembly, the Tol-Pal system is composed of five core proteins: the inner membrane proteins TolA, TolQ and TolR, the periplasmic protein TolB and the outer membrane protein Pal. They form a network linking the inner and outer membranes and the peptidoglycan layer.

The protein localises to the periplasm. Functionally, part of the Tol-Pal system, which plays a role in outer membrane invagination during cell division and is important for maintaining outer membrane integrity. The protein is Tol-Pal system protein TolB of Geobacter metallireducens (strain ATCC 53774 / DSM 7210 / GS-15).